The primary structure comprises 271 residues: Ribosomal RNA small subunit methyltransferase A (271 aa).

Residues H11, L13, G38, E58, D86, and N101 each coordinate S-adenosyl-L-methionine.

This sequence belongs to the class I-like SAM-binding methyltransferase superfamily. rRNA adenine N(6)-methyltransferase family. RsmA subfamily.

It localises to the cytoplasm. It carries out the reaction adenosine(1518)/adenosine(1519) in 16S rRNA + 4 S-adenosyl-L-methionine = N(6)-dimethyladenosine(1518)/N(6)-dimethyladenosine(1519) in 16S rRNA + 4 S-adenosyl-L-homocysteine + 4 H(+). Functionally, specifically dimethylates two adjacent adenosines (A1518 and A1519) in the loop of a conserved hairpin near the 3'-end of 16S rRNA in the 30S particle. May play a critical role in biogenesis of 30S subunits. This chain is Ribosomal RNA small subunit methyltransferase A, found in Helicobacter pylori (strain Shi470).